The sequence spans 186 residues: Large ribosomal subunit protein uL5m (186 aa).

The protein belongs to the universal ribosomal protein uL5 family.

Its subcellular location is the mitochondrion. The protein is Large ribosomal subunit protein uL5m (RPL5) of Solanum tuberosum (Potato).